The sequence spans 53 residues: Conotoxin Cal22e (53 aa).

Residues 1 to 5 constitute a propeptide that is removed on maturation; it reads GRPSA.

Contains 4 disulfide bonds. Expressed by the venom duct.

Its subcellular location is the secreted. Its function is as follows. Probable neurotoxin with unknown target. Possibly targets ion channels. This Californiconus californicus (California cone) protein is Conotoxin Cal22e.